Here is a 179-residue protein sequence, read N- to C-terminus: Replication restart protein DnaT (179 aa).

The disordered stretch occupies residues 156 to 179; that stretch reads GGLPKRDVNTVSEPDSQIPPGFRG.

It belongs to the DnaT family. As to quaternary structure, homooligomerizes. Interacts with PriB. Component of the replication restart primosome. Primosome assembly occurs via a 'hand-off' mechanism. PriA binds to replication forks, subsequently PriB then DnaT bind; DnaT then displaces ssDNA to generate the helicase loading substrate.

Its function is as follows. Involved in the restart of stalled replication forks, which reloads the replicative helicase on sites other than the origin of replication. Can function in multiple replication restart pathways. Displaces ssDNA from a PriB-ssDNA complex. Probably forms a spiral filament on ssDNA. The sequence is that of Replication restart protein DnaT from Shigella dysenteriae serotype 1 (strain Sd197).